The following is a 169-amino-acid chain: uncharacterized protein (169 aa).

Positions 28-157 (ELHLVIHVCI…EFIPYFFLNQ (130 aa)) constitute a Nudix hydrolase domain. The Nudix box motif lies at 65–87 (AGSALKGETSQQAAEREVQEELG). The Mg(2+) site is built by glutamate 81 and glutamate 85.

Belongs to the Nudix hydrolase family. Mg(2+) serves as cofactor.

This is an uncharacterized protein from Listeria monocytogenes serovar 1/2a (strain ATCC BAA-679 / EGD-e).